Reading from the N-terminus, the 382-residue chain is Solvent efflux pump periplasmic linker SrpA (382 aa).

The N-terminal stretch at 1–23 (MRQIRSPRALRVIPLTALMLISG) is a signal peptide. The N-palmitoyl cysteine moiety is linked to residue cysteine 24. Cysteine 24 carries S-diacylglycerol cysteine lipidation. Positions 98–127 (RTYEAQLRRAEANRTSAQNLARRYETLLKT) form a coiled coil.

Belongs to the membrane fusion protein (MFP) (TC 8.A.1) family.

It is found in the cell inner membrane. The periplasmic linker protein component of an organic solvent efflux pump. Involved in export of a number of low log POW compounds including hexane (log POW 3.5), toluene (log POW 2.5) and dimethylphthalate (log POW 2.3). The solvent resistance phenotype has been postulated to depend on the operon expression level. In Pseudomonas putida (Arthrobacter siderocapsulatus), this protein is Solvent efflux pump periplasmic linker SrpA (srpA).